Reading from the N-terminus, the 124-residue chain is Small ribosomal subunit protein uS13 (124 aa).

The tract at residues 99–124 (RGQRTRTNARTRKGPRKTVGVMRKKS) is disordered. Over residues 101–124 (QRTRTNARTRKGPRKTVGVMRKKS) the composition is skewed to basic residues.

Belongs to the universal ribosomal protein uS13 family. In terms of assembly, part of the 30S ribosomal subunit. Forms a loose heterodimer with protein S19. Forms two bridges to the 50S subunit in the 70S ribosome.

In terms of biological role, located at the top of the head of the 30S subunit, it contacts several helices of the 16S rRNA. In the 70S ribosome it contacts the 23S rRNA (bridge B1a) and protein L5 of the 50S subunit (bridge B1b), connecting the 2 subunits; these bridges are implicated in subunit movement. Contacts the tRNAs in the A and P-sites. The sequence is that of Small ribosomal subunit protein uS13 from Caldicellulosiruptor saccharolyticus (strain ATCC 43494 / DSM 8903 / Tp8T 6331).